Consider the following 520-residue polypeptide: Trichothecene O-acetyltransferase TRI3 (520 aa).

A disordered region spans residues 1–23 (MGSKLPELPKLSPEKHRWEKSNV). The span at 12–23 (SPEKHRWEKSNV) shows a compositional bias: basic and acidic residues.

Belongs to the trichothecene O-acetyltransferase family.

Its pathway is sesquiterpene biosynthesis; trichothecene biosynthesis. In terms of biological role, trichothecene O-acetyltransferase; part of the gene cluster that mediates the production of the antimicrobial trichothecene harzianum A (HA) that plays a role in Botrytis cinerea antagonistic activity and plant defense priming. The biosynthesis of harzianum A begins with the cyclization of farnesyl diphosphate to trichodiene and is catalyzed by the trichodiene synthase TRI5. Trichodiene undergoes a series of oxygenations catalyzed by the cytochrome P450 monooxygenase TRI4. TRI4 controls the addition of 3 oxygens at C-2, C-11, and the C-12, C-13-epoxide to form the intermediate isotrichodiol. Isotrichodiol then undergoes a non-enzymatic isomerization and cyclization to form 12,13-epoxytrichothec-9-ene (EPT) which is further converted to trichodermol by the cytochrome P450 monooxygenase TRI11 via C-4 hydroxylation. The last step of HA synthesis is esterification of an octatriendioyl moiety to the C-4 oxygen of trichodermol. The octatriendioyl moiety is probably produced by the polyketide synthase TRI17 and the esterification performed by the trichothecene O-acetyltransferase TRI3. This chain is Trichothecene O-acetyltransferase TRI3, found in Trichoderma arundinaceum.